The chain runs to 284 residues: MLSKQIPLGIYEKALPAGECWLERLRLAKTLGFDFVEMSVDETDARLARLDWSREQRLALVSAVAETGVRVPSMCLSAHRRFPLGSEDDAVRAQGLEIMRKAIQFAQDVGIRVIQLAGYDVYYQQANDETRCRFRDGLKESVDMASRAQVTLAMEIMDYPLMNSISKALGYAHYLNNPWFQLYPDIGNLSAWDNDVQMELQAGIGHIVAVHVKDTKPGVFKNVPFGEGVVDFERCFETLKQSGYCGPYLIEMWSETAENPAAEVAKARDWVKARMASAGLVEAA.

It belongs to the L-ribulose-5-phosphate 3-epimerase family.

The catalysed reaction is L-ribulose 5-phosphate = L-xylulose 5-phosphate. Its pathway is cofactor degradation; L-ascorbate degradation; D-xylulose 5-phosphate from L-ascorbate: step 3/4. Functionally, catalyzes the isomerization of L-xylulose-5-phosphate to L-ribulose-5-phosphate. Is involved in the anaerobic L-ascorbate utilization. In Salmonella dublin (strain CT_02021853), this protein is L-ribulose-5-phosphate 3-epimerase UlaE.